Reading from the N-terminus, the 319-residue chain is Methionyl-tRNA formyltransferase (319 aa).

113–116 (SLLP) is a (6S)-5,6,7,8-tetrahydrofolate binding site.

The protein belongs to the Fmt family.

The catalysed reaction is L-methionyl-tRNA(fMet) + (6R)-10-formyltetrahydrofolate = N-formyl-L-methionyl-tRNA(fMet) + (6S)-5,6,7,8-tetrahydrofolate + H(+). Functionally, attaches a formyl group to the free amino group of methionyl-tRNA(fMet). The formyl group appears to play a dual role in the initiator identity of N-formylmethionyl-tRNA by promoting its recognition by IF2 and preventing the misappropriation of this tRNA by the elongation apparatus. This Hamiltonella defensa subsp. Acyrthosiphon pisum (strain 5AT) protein is Methionyl-tRNA formyltransferase.